Consider the following 299-residue polypeptide: Tyrosine recombinase XerC (299 aa).

In terms of domain architecture, Core-binding (CB) spans 1–85 (MEQHLDAYCM…AVRGFYKYLN (85 aa)). A Tyr recombinase domain is found at 106–285 (RLPKTLDTDR…DFQHLATVYD (180 aa)). Active-site residues include Arg146, Lys170, His237, Arg240, and His263. Tyr272 acts as the O-(3'-phospho-DNA)-tyrosine intermediate in catalysis.

It belongs to the 'phage' integrase family. XerC subfamily. As to quaternary structure, forms a cyclic heterotetrameric complex composed of two molecules of XerC and two molecules of XerD.

The protein localises to the cytoplasm. Functionally, site-specific tyrosine recombinase, which acts by catalyzing the cutting and rejoining of the recombining DNA molecules. The XerC-XerD complex is essential to convert dimers of the bacterial chromosome into monomers to permit their segregation at cell division. It also contributes to the segregational stability of plasmids. This is Tyrosine recombinase XerC from Pseudomonas savastanoi pv. phaseolicola (strain 1448A / Race 6) (Pseudomonas syringae pv. phaseolicola (strain 1448A / Race 6)).